The chain runs to 128 residues: uncharacterized protein (128 aa).

The next 4 membrane-spanning stretches (helical) occupy residues 5 to 25 (ILAL…YSMM), 27 to 47 (PVLV…PLFL), 60 to 80 (QLWW…FIGL), and 87 to 107 (SAVT…HFFF). In terms of domain architecture, EamA spans 9–110 (LIWSSSLIVG…FVGHFFFKTK (102 aa)).

The protein resides in the cell membrane. This is an uncharacterized protein from Haemophilus influenzae (strain ATCC 51907 / DSM 11121 / KW20 / Rd).